The following is a 248-amino-acid chain: Tyrosine recombinase XerD-like (248 aa).

Residues 1–72 (MKSYIEPFIA…TANQFLYYLY (72 aa)) form the Core-binding (CB) domain. Residues 85–248 (DTMKVMRTEK…PVTLEKYYKS (164 aa)) form the Tyr recombinase domain. Active-site residues include lysine 149 and arginine 213. Catalysis depends on tyrosine 245, which acts as the O-(3'-phospho-DNA)-tyrosine intermediate.

Belongs to the 'phage' integrase family. XerD-like subfamily.

Its subcellular location is the cytoplasm. Functionally, putative tyrosine recombinase. Not involved in the cutting and rejoining of the recombining DNA molecules on dif(SL) site. In Streptococcus pyogenes serotype M6 (strain ATCC BAA-946 / MGAS10394), this protein is Tyrosine recombinase XerD-like.